The sequence spans 1331 residues: Retrotransposon-like protein 1 (1331 aa).

Disordered stretches follow at residues 1–123, 128–147, 556–595, and 971–1033; these read MMEP…SQED, TDLAESEEDESPEEPDSSTV, EADEETSDQPSSDGSDDLSESEPSELQQAGDSDQSEETFY, and PSSE…DEPN. Low complexity predominate over residues 19-30; that stretch reads SSKQMESSEGSS. 3 stretches are compositionally biased toward acidic residues: residues 109–123, 128–143, and 569–578; these read EMEEEEDNPWESQED, TDLAESEEDESPEEPD, and GSDDLSESEP. The segment covering 992–1001 has biased composition (low complexity); the sequence is RRVATTTRPT. Residues 1015-1024 are compositionally biased toward acidic residues; sequence PESEDEEESE. A run of 2 helical transmembrane segments spans residues 1070-1090 and 1117-1137; these read FYRSLLFWKNLLAMAALLVML and LFLDASLLTSSGIATAVTQLF. The segment at 1309–1331 is disordered; the sequence is SPPREGATLEELPSDADEDAGLD. Residues 1320–1331 show a composition bias toward acidic residues; the sequence is LPSDADEDAGLD.

It localises to the membrane. Its function is as follows. Plays an essential role in capillaries endothelial cells for the maintenance of feto-maternal interface and for development of the placenta. The chain is Retrotransposon-like protein 1 (RTL1) from Bos taurus (Bovine).